Consider the following 235-residue polypeptide: Ubiquinone biosynthesis O-methyltransferase (235 aa).

S-adenosyl-L-methionine is bound by residues arginine 39, glycine 59, aspartate 80, and methionine 124.

Belongs to the methyltransferase superfamily. UbiG/COQ3 family.

It catalyses the reaction a 3-demethylubiquinol + S-adenosyl-L-methionine = a ubiquinol + S-adenosyl-L-homocysteine + H(+). The enzyme catalyses a 3-(all-trans-polyprenyl)benzene-1,2-diol + S-adenosyl-L-methionine = a 2-methoxy-6-(all-trans-polyprenyl)phenol + S-adenosyl-L-homocysteine + H(+). Its pathway is cofactor biosynthesis; ubiquinone biosynthesis. In terms of biological role, O-methyltransferase that catalyzes the 2 O-methylation steps in the ubiquinone biosynthetic pathway. In Vibrio campbellii (strain ATCC BAA-1116), this protein is Ubiquinone biosynthesis O-methyltransferase.